A 416-amino-acid chain; its full sequence is Serine--tRNA ligase (416 aa).

232-234 provides a ligand contact to L-serine; that stretch reads TAE. An ATP-binding site is contributed by 263–265; sequence RKE. Glu286 contributes to the L-serine binding site. 350–353 contributes to the ATP binding site; it reads EISS. Residue Ser384 coordinates L-serine.

Belongs to the class-II aminoacyl-tRNA synthetase family. Type-1 seryl-tRNA synthetase subfamily. As to quaternary structure, homodimer. The tRNA molecule binds across the dimer.

It is found in the cytoplasm. The enzyme catalyses tRNA(Ser) + L-serine + ATP = L-seryl-tRNA(Ser) + AMP + diphosphate + H(+). The catalysed reaction is tRNA(Sec) + L-serine + ATP = L-seryl-tRNA(Sec) + AMP + diphosphate + H(+). Its pathway is aminoacyl-tRNA biosynthesis; selenocysteinyl-tRNA(Sec) biosynthesis; L-seryl-tRNA(Sec) from L-serine and tRNA(Sec): step 1/1. Catalyzes the attachment of serine to tRNA(Ser). Is also able to aminoacylate tRNA(Sec) with serine, to form the misacylated tRNA L-seryl-tRNA(Sec), which will be further converted into selenocysteinyl-tRNA(Sec). This Nautilia profundicola (strain ATCC BAA-1463 / DSM 18972 / AmH) protein is Serine--tRNA ligase.